The primary structure comprises 182 residues: Putative manganese efflux pump MntP (182 aa).

A run of 6 helical transmembrane segments spans residues 6–26, 37–57, 71–91, 101–121, 131–151, and 162–182; these read LIPL…VSLG, ILYI…IGMV, HFAG…STIL, IGIS…SVGL, IITI…GLLI, and YGEI…LFPI.

This sequence belongs to the MntP (TC 9.B.29) family.

It localises to the cell membrane. In terms of biological role, probably functions as a manganese efflux pump. The polypeptide is Putative manganese efflux pump MntP (Bacillus cereus (strain B4264)).